The primary structure comprises 254 residues: Urease accessory protein UreF (254 aa).

The span at 1-11 (MDKGKSVKSTE) shows a compositional bias: basic and acidic residues. Residues 1-26 (MDKGKSVKSTEKSVGMPPKTPKTDNN) form a disordered region.

It belongs to the UreF family. UreH, UreF and UreG form a complex that acts as a GTP-hydrolysis-dependent molecular chaperone, activating the urease apoprotein by helping to assemble the nickel containing metallocenter of UreC. The UreE protein probably delivers the nickel.

The protein resides in the cytoplasm. In terms of biological role, required for maturation of urease via the functional incorporation of the urease nickel metallocenter. The chain is Urease accessory protein UreF from Helicobacter pylori (strain ATCC 700392 / 26695) (Campylobacter pylori).